Consider the following 218-residue polypeptide: Small ribosomal subunit protein uS3c (218 aa).

One can recognise a KH type-2 domain in the interval 43–118 (IKNYVQKNMK…KLNISITRIE (76 aa)).

This sequence belongs to the universal ribosomal protein uS3 family. In terms of assembly, part of the 30S ribosomal subunit.

It localises to the plastid. Its subcellular location is the chloroplast. The polypeptide is Small ribosomal subunit protein uS3c (rps3) (Populus alba (White poplar)).